Reading from the N-terminus, the 370-residue chain is Chaperone protein DnaJ (370 aa).

In terms of domain architecture, J spans 7–73 (DYYEILGVPR…QKRAMYDRFG (67 aa)). Residues 144-226 (GTEIPIEYER…CGGSGRVLRR (83 aa)) form a CR-type zinc finger. Zn(2+)-binding residues include C157, C160, C174, C177, C200, C203, C214, and C217. CXXCXGXG motif repeat units follow at residues 157 to 164 (CPRCGGTG), 174 to 181 (CPRCGGTG), 200 to 207 (CDECGGTG), and 214 to 221 (CHECGGSG).

It belongs to the DnaJ family. Homodimer. The cofactor is Zn(2+).

The protein localises to the cytoplasm. In terms of biological role, participates actively in the response to hyperosmotic and heat shock by preventing the aggregation of stress-denatured proteins and by disaggregating proteins, also in an autonomous, DnaK-independent fashion. Unfolded proteins bind initially to DnaJ; upon interaction with the DnaJ-bound protein, DnaK hydrolyzes its bound ATP, resulting in the formation of a stable complex. GrpE releases ADP from DnaK; ATP binding to DnaK triggers the release of the substrate protein, thus completing the reaction cycle. Several rounds of ATP-dependent interactions between DnaJ, DnaK and GrpE are required for fully efficient folding. Also involved, together with DnaK and GrpE, in the DNA replication of plasmids through activation of initiation proteins. This chain is Chaperone protein DnaJ, found in Thermotoga neapolitana (strain ATCC 49049 / DSM 4359 / NBRC 107923 / NS-E).